An 887-amino-acid chain; its full sequence is Exocyst complex component SEC3A (887 aa).

Coiled-coil stretches lie at residues 221-248 (IGEAEAFSERLKRELQALEAANVHAILE) and 281-301 (LRHMREDIESIETRNNKLEMQ). The disordered stretch occupies residues 542 to 581 (GAGNDKKSQSNNDDGNDDDDLGIMDIDETDKKPGKNSPDL). Over residues 555 to 569 (DGNDDDDLGIMDIDE) the composition is skewed to acidic residues.

This sequence belongs to the SEC3 family. As to quaternary structure, the exocyst complex is composed of SEC3, SEC5, SEC6, SEC8, SEC10, EXO70A1 and EXO84B. Interacts with EXO70A1, SEC5A and ICR1, but not with ICR2. Binds to EXO70H1. Binds directly to B1L. Widely expressed. Preferentially expressed in tissues containing dividing and expanding cells, such as the shoot apical meristem, root tip, lateral root primordia and developing embryos.

The protein resides in the cytoplasm. It localises to the cytosol. The protein localises to the cell membrane. Its subcellular location is the cytoskeleton. It is found in the phragmoplast. The protein resides in the secreted. It localises to the extracellular exosome. Its function is as follows. Component of the exocyst complex involved in the docking of exocytic vesicles with fusion sites on the plasma membrane during regulated or polarized secretion. Involved in polarized cell growth and organ morphogenesis. During cytokinesis, involved in cell plate initiation, cell plate maturation and formation of new primary cell wall. During cytokinesis, involved in cell plate initiation, cell plate maturation and formation of new primary cell wall. The chain is Exocyst complex component SEC3A from Arabidopsis thaliana (Mouse-ear cress).